Here is a 215-residue protein sequence, read N- to C-terminus: Glycerol-3-phosphate acyltransferase (215 aa).

The next 5 helical transmembrane spans lie at serine 14–valine 34, threonine 63–alanine 83, tryptophan 92–leucine 112, methionine 128–phenylalanine 148, and leucine 154–alanine 174.

The protein belongs to the PlsY family. As to quaternary structure, probably interacts with PlsX.

It is found in the cell inner membrane. The catalysed reaction is an acyl phosphate + sn-glycerol 3-phosphate = a 1-acyl-sn-glycero-3-phosphate + phosphate. It functions in the pathway lipid metabolism; phospholipid metabolism. Functionally, catalyzes the transfer of an acyl group from acyl-phosphate (acyl-PO(4)) to glycerol-3-phosphate (G3P) to form lysophosphatidic acid (LPA). This enzyme utilizes acyl-phosphate as fatty acyl donor, but not acyl-CoA or acyl-ACP. This is Glycerol-3-phosphate acyltransferase from Bordetella bronchiseptica (strain ATCC BAA-588 / NCTC 13252 / RB50) (Alcaligenes bronchisepticus).